A 398-amino-acid polypeptide reads, in one-letter code: Mu-type opioid receptor (398 aa).

Residues 1-66 (MDSSTGPGNT…CPQTGSPSMV (66 aa)) are Extracellular-facing. N-linked (GlcNAc...) asparagine glycans are attached at residues Asn-9, Asn-31, Asn-38, Asn-46, and Asn-53. A helical transmembrane segment spans residues 67 to 91 (TAITIMALYSIVCVVGLFGNFLVMY). Residues 92 to 104 (VIVRYTKMKTATN) are Cytoplasmic-facing. A helical transmembrane segment spans residues 105 to 129 (IYIFNLALADALATSTLPFQSVNYL). Over 130 to 140 (MGTWPFGTILC) the chain is Extracellular. A disulfide bridge links Cys-140 with Cys-217. The helical transmembrane segment at 141-163 (KIVISIDYYNMFTSIFTLCTMSV) threads the bilayer. Residues 164–183 (DRYIAVCHPVKALDFRTPRN) lie on the Cytoplasmic side of the membrane. Tyr-166 bears the Phosphotyrosine mark. Residues 184–205 (AKIVNVCNWILSSAIGLPVMFM) form a helical membrane-spanning segment. Topologically, residues 206–228 (ATTKYRQGSIDCTLTFSHPTWYW) are extracellular. Residues 229 to 253 (ENLLKICVFIFAFIMPVLIITVCYG) form a helical membrane-spanning segment. At 254-277 (LMILRLKSVRMLSGSKEKDRNLRR) the chain is on the cytoplasmic side. Residues 278 to 304 (ITRMVLVVVAVFIVCWTPIHIYVIIKA) traverse the membrane as a helical segment. Over 305 to 312 (LITIPETT) the chain is Extracellular. A helical membrane pass occupies residues 313-336 (FQTVSWHFCIALGYTNSCLNPVLY). Residues 332-336 (NPVLY) carry the NPxxY; plays a role in stabilizing the activated conformation of the receptor motif. The Cytoplasmic portion of the chain corresponds to 337 to 398 (AFLDENFKRC…NLEAETAPLP (62 aa)). Residue Cys-351 is the site of S-palmitoyl cysteine attachment. The segment at 361 to 385 (QNSTRVRQNTREHPSTANTVDRTNH) is disordered. Ser-363 is subject to Phosphoserine. The residue at position 370 (Thr-370) is a Phosphothreonine. Residue Ser-375 is modified to Phosphoserine. Residue Thr-394 is modified to Phosphothreonine.

The protein belongs to the G-protein coupled receptor 1 family. As to quaternary structure, forms homooligomers and heterooligomers with other GPCRs, such as OPRD1, OPRK1, OPRL1, NPFFR2, ADRA2A, SSTR2, CNR1 and CCR5 (probably in dimeric forms). Interacts with heterotrimeric G proteins; interaction with a heterotrimeric complex containing GNAI1, GNB1 and GNG2 stabilizes the active conformation of the receptor and increases its affinity for endomorphin-2, the synthetic opioid peptide DAMGO and for morphinan agonists. Interacts with PPL; the interaction disrupts agonist-mediated G-protein activation. Interacts (via C-terminus) with DNAJB4 (via C-terminus). Interacts with calmodulin; the interaction inhibits the constitutive activity of OPRM1; it abolishes basal and attenuates agonist-stimulated G-protein coupling. Interacts with FLNA, PLD2, RANBP9 and WLS and GPM6A. Interacts with RTP4. Interacts with SYP and GNAS. Interacts with RGS9, RGS17, RGS20, RGS4, PPP1R9B and HINT1. In terms of processing, phosphorylated. Differentially phosphorylated in basal and agonist-induced conditions. Agonist-mediated phosphorylation modulates receptor internalization. Phosphorylated by GRK2 in a agonist-dependent manner. Phosphorylation at Tyr-166 requires receptor activation, is dependent on non-receptor protein tyrosine kinase Src and results in a decrease in agonist efficacy by reducing G-protein coupling efficiency. Phosphorylated on tyrosine residues; the phosphorylation is involved in agonist-induced G-protein-independent receptor down-regulation. Phosphorylation at Ser-375 is involved in G-protein-dependent but not beta-arrestin-dependent activation of the ERK pathway. Ubiquitinated. A basal ubiquitination seems not to be related to degradation. Ubiquitination is increased upon formation of OPRM1:OPRD1 oligomers leading to proteasomal degradation; the ubiquitination is diminished by RTP4. In terms of tissue distribution, brain. Is expressed in the cerebral cortex, caudate putamen, nucleus accumbens, septal nuclei, thalamus, hippocampus, and habenula. Not detected in cerebellum.

It localises to the cell membrane. Its subcellular location is the cell projection. The protein resides in the axon. It is found in the perikaryon. The protein localises to the dendrite. It localises to the endosome. Its function is as follows. Receptor for endogenous opioids such as beta-endorphin and endomorphin. Receptor for natural and synthetic opioids including morphine, heroin, DAMGO, fentanyl, etorphine, buprenorphin and methadone. Also activated by enkephalin peptides, such as Met-enkephalin or Met-enkephalin-Arg-Phe, with higher affinity for Met-enkephalin-Arg-Phe. Agonist binding to the receptor induces coupling to an inactive GDP-bound heterotrimeric G-protein complex and subsequent exchange of GDP for GTP in the G-protein alpha subunit leading to dissociation of the G-protein complex with the free GTP-bound G-protein alpha and the G-protein beta-gamma dimer activating downstream cellular effectors. The agonist- and cell type-specific activity is predominantly coupled to pertussis toxin-sensitive G(i) and G(o) G alpha proteins, GNAI1, GNAI2, GNAI3 and GNAO1 isoforms Alpha-1 and Alpha-2, and to a lesser extent to pertussis toxin-insensitive G alpha proteins GNAZ and GNA15. They mediate an array of downstream cellular responses, including inhibition of adenylate cyclase activity and both N-type and L-type calcium channels, activation of inward rectifying potassium channels, mitogen-activated protein kinase (MAPK), phospholipase C (PLC), phosphoinositide/protein kinase (PKC), phosphoinositide 3-kinase (PI3K) and regulation of NF-kappa-B. Also couples to adenylate cyclase stimulatory G alpha proteins. The selective temporal coupling to G-proteins and subsequent signaling can be regulated by RGSZ proteins, such as RGS9, RGS17 and RGS4. Phosphorylation by members of the GPRK subfamily of Ser/Thr protein kinases and association with beta-arrestins is involved in short-term receptor desensitization. Beta-arrestins associate with the GPRK-phosphorylated receptor and uncouple it from the G-protein thus terminating signal transduction. The phosphorylated receptor is internalized through endocytosis via clathrin-coated pits which involves beta-arrestins. The activation of the ERK pathway occurs either in a G-protein-dependent or a beta-arrestin-dependent manner and is regulated by agonist-specific receptor phosphorylation. Acts as a class A G-protein coupled receptor (GPCR) which dissociates from beta-arrestin at or near the plasma membrane and undergoes rapid recycling. Receptor down-regulation pathways are varying with the agonist and occur dependent or independent of G-protein coupling. Endogenous ligands induce rapid desensitization, endocytosis and recycling. Heterooligomerization with other GPCRs can modulate agonist binding, signaling and trafficking properties. The protein is Mu-type opioid receptor (Oprm1) of Rattus norvegicus (Rat).